Reading from the N-terminus, the 261-residue chain is Global transcriptional regulator CodY (261 aa).

Residues 1 to 159 (MPNLLEKTRK…ASTVVGIQLL (159 aa)) form a GAF domain region. A DNA-binding region (H-T-H motif) is located at residues 207-226 (ASVIADRIGITRSVIVNALR).

Belongs to the CodY family.

Its subcellular location is the cytoplasm. In terms of biological role, DNA-binding global transcriptional regulator which is involved in the adaptive response to starvation and acts by directly or indirectly controlling the expression of numerous genes in response to nutrient availability. During rapid exponential growth, CodY is highly active and represses genes whose products allow adaptation to nutrient depletion. In Streptococcus agalactiae serotype III (strain NEM316), this protein is Global transcriptional regulator CodY.